The chain runs to 522 residues: BTB/POZ domain-containing protein 3 (522 aa).

The 71-residue stretch at 120 to 190 (ADVHFVVGPP…IYCDEIDLAA (71 aa)) folds into the BTB domain. The BACK domain maps to 235–300 (FEEPDLTQRC…NWAEVECQRQ (66 aa)).

Strongly expressed in the primary visual cortex.

It localises to the cytoplasm. It is found in the cytosol. The protein resides in the nucleus. Acts as a key regulator of dendritic field orientation during development of sensory cortex. Also directs dendrites toward active axon terminals when ectopically expressed. In Callithrix jacchus (White-tufted-ear marmoset), this protein is BTB/POZ domain-containing protein 3 (BTBD3).